The sequence spans 188 residues: Inosine triphosphate pyrophosphatase (188 aa).

7–12 (TGNAGK) lines the ITP pocket. Glu-36 contacts Mg(2+). ITP-binding positions include Lys-48, 64–65 (DT), Lys-81, 140–143 (FGWN), Lys-163, and 168–169 (HR).

The protein belongs to the HAM1 NTPase family. As to quaternary structure, homodimer. The cofactor is Mg(2+). Requires Mn(2+) as cofactor.

The protein localises to the cytoplasm. It localises to the nucleus. The catalysed reaction is ITP + H2O = IMP + diphosphate + H(+). It catalyses the reaction dITP + H2O = dIMP + diphosphate + H(+). The enzyme catalyses XTP + H2O = XMP + diphosphate + H(+). Its function is as follows. Pyrophosphatase that hydrolyzes non-canonical purine nucleotides such as inosine triphosphate (ITP), deoxyinosine triphosphate (dITP) or xanthosine 5'-triphosphate (XTP) to their respective monophosphate derivatives. The enzyme does not distinguish between the deoxy- and ribose forms. Probably excludes non-canonical purines from RNA and DNA precursor pools, thus preventing their incorporation into RNA and DNA and avoiding chromosomal lesions. The protein is Inosine triphosphate pyrophosphatase of Yarrowia lipolytica (strain CLIB 122 / E 150) (Yeast).